Here is a 52-residue protein sequence, read N- to C-terminus: Rubredoxin (52 aa).

Met1 bears the N-formylmethionine; partial mark. The 52-residue stretch at 1–52 (MKKYGCLVCGYVYDPAKGDPDHGIAPGTAFEDLPADWVCPLCGVSKDEFEPL) folds into the Rubredoxin-like domain. 4 residues coordinate Fe cation: Cys6, Cys9, Cys39, and Cys42.

This sequence belongs to the rubredoxin family. The cofactor is Fe(3+). In terms of processing, observed in four forms, with and without iron, and with and without formylation at Met-1.

Functionally, rubredoxin is a small nonheme, iron protein lacking acid-labile sulfide. Its single Fe, chelated to 4 Cys, functions as an electron acceptor and may also stabilize the conformation of the molecule. This Heliobacterium mobile (Heliobacillus mobilis) protein is Rubredoxin.